We begin with the raw amino-acid sequence, 457 residues long: Transcription factor PCF7 (457 aa).

Residues S58–Q84 adopt a coiled-coil conformation. The disordered stretch occupies residues R95 to T119. Gly residues predominate over residues G101–S115. In terms of domain architecture, TCP spans R140–L198. 2 disordered regions span residues P199–N231 and K263–Q299. 2 stretches are compositionally biased toward low complexity: residues A210 to T225 and S268 to A278.

In terms of assembly, forms homodimers and heterodimers.

It localises to the nucleus. Its function is as follows. Transcription activator. Binds the promoter core sequence 5'-GGNCC-3'. The sequence is that of Transcription factor PCF7 (PCF7) from Oryza sativa subsp. japonica (Rice).